Reading from the N-terminus, the 1390-residue chain is DNA-directed RNA polymerase III subunit RPC1 (1390 aa).

Zn(2+) contacts are provided by cysteine 69, cysteine 72, cysteine 79, histidine 82, cysteine 109, and cysteine 112. Residue lysine 144 participates in DNA binding. 2 residues coordinate Zn(2+): cysteine 156 and cysteine 159. The DNA site is built by lysine 167, serine 326, lysine 348, arginine 353, arginine 360, and arginine 366. N6-acetyllysine is present on lysine 445. Arginine 464 is an RNA binding site. Residues aspartate 499, aspartate 501, and aspartate 503 each contribute to the Mg(2+) site. Aspartate 503 serves as a coordination point for RNA. Positions 843-884 (TPTEFFFHTMAGREGLVDTAVKTAETGYMQRRLVKSLEDLCS) are bridging helix. The tract at residues 1029–1070 (PGSAVGALCAQSIGEPGTQMTLKTFHFAGVASMNITLGVPRI) is trigger loop. Residues arginine 1159, arginine 1305, and lysine 1323 each coordinate DNA.

The protein belongs to the RNA polymerase beta' chain family. In terms of assembly, component of the RNA polymerase III (Pol III) (Pol III) complex consisting of 17 subunits: a ten-subunit catalytic core composed of POLR3A/RPC1, POLR3B/RPC2, POLR1C/RPAC1, POLR1D/RPAC2, POLR3K/RPC10, POLR2E/RPABC1, POLR2F/RPABC2, POLR2H/RPABC3, POLR2K/RPABC4 and POLR2L/RPABC5; a mobile stalk composed of two subunits POLR3H/RPC8 and CRCP/RPC9, protruding from the core and functioning primarily in transcription initiation; and additional subunits homologous to general transcription factors of the RNA polymerase II machinery, POLR3C/RPC3-POLR3F/RPC6-POLR3G/RPC7 heterotrimer required for transcription initiation and POLR3D/RPC4-POLR3E/RPC5 heterodimer involved in both transcription initiation and termination. Pol III exists as two alternative complexes defined by the mutually exclusive incorporation of subunit POLR3G/RPC7alpha or POLR3GL/RPC7beta. The presence of POLR3G/RPC7alpha or POLR3GL/RPC7beta differentially modulates the transcription potential of Pol III, with POLR3G/RPC7alpha specifically associated with transcription of snaR-A non-coding RNAs. As part of the RNA polymerase III complex, interacts with PKP2. The cofactor is Mg(2+). Expressed in the brain, in the cortex and the white matter (at protein level).

The protein localises to the nucleus. The protein resides in the cytoplasm. It localises to the cytosol. It catalyses the reaction RNA(n) + a ribonucleoside 5'-triphosphate = RNA(n+1) + diphosphate. Its function is as follows. Catalytic core component of RNA polymerase III (Pol III), a DNA-dependent RNA polymerase which synthesizes small non-coding RNAs using the four ribonucleoside triphosphates as substrates. Synthesizes 5S rRNA, snRNAs, tRNAs and miRNAs from at least 500 distinct genomic loci. Pol III-mediated transcription cycle proceeds through transcription initiation, transcription elongation and transcription termination stages. During transcription initiation, Pol III is recruited to DNA promoters type I, II or III with the help of general transcription factors and other specific initiation factors. Once the polymerase has escaped from the promoter it enters the elongation phase during which RNA is actively polymerized, based on complementarity with the template DNA strand. Transcription termination involves the release of the RNA transcript and polymerase from the DNA. Forms Pol III active center together with the second largest subunit POLR3B/RPC2. Appends one nucleotide at a time to the 3' end of the nascent RNA, with POLR3A/RPC1 contributing a Mg(2+)-coordinating DxDGD motif, and POLR3B/RPC2 participating in the coordination of a second Mg(2+) ion and providing lysine residues believed to facilitate Watson-Crick base pairing between the incoming nucleotide and template base. Typically, Mg(2+) ions direct a 5' nucleoside triphosphate to form a phosphodiester bond with the 3' hydroxyl of the preceding nucleotide of the nascent RNA, with the elimination of pyrophosphate. Pol III plays a key role in sensing and limiting infection by intracellular bacteria and DNA viruses. Acts as a nuclear and cytosolic DNA sensor involved in innate immune response. Can sense non-self dsDNA that serves as template for transcription into dsRNA. The non-self RNA polymerase III transcripts, such as Epstein-Barr virus-encoded RNAs (EBERs) induce type I interferon and NF-kappa-B through the RIG-I pathway. The chain is DNA-directed RNA polymerase III subunit RPC1 from Homo sapiens (Human).